Here is a 571-residue protein sequence, read N- to C-terminus: Optineurin (571 aa).

2 disordered regions span residues 1–32 (MSHQPLSCLTEKGDSPSESTGNGPPHLAHPNL) and 100–144 (LSHE…DQLR). The stretch at 38-170 (EELLQQMKEL…VSELQLKLNS (133 aa)) forms a coiled coil. The segment at 58 to 209 (MKLNNQAMKG…GPTRTVSIGT (152 aa)) is interaction with Rab8. Basic and acidic residues-rich tracts occupy residues 100-123 (LSHENEKLKEELGKLKGKSERSSE) and 130-143 (RLPRAEAEQEKDQL). An LIR motif is present at residues 176 to 181 (DSFVEI). A Phosphoserine; by TBK1 modification is found at Ser177. The span at 186–197 (GEAEGSVKEIKH) shows a compositional bias: basic and acidic residues. Disordered regions lie at residues 186-210 (GEAEGSVKEIKHSPGPTRTVSIGTS) and 255-291 (VSDFEKKASNRSEIETQTEGSTEKENEEEKGPETVGS). A Phosphoserine modification is found at Ser198. Over residues 201-210 (PTRTVSIGTS) the composition is skewed to polar residues. The stretch at 233-502 (CLREGNQKVE…LLKENDAFED (270 aa)) forms a coiled coil. Basic and acidic residues-rich tracts occupy residues 255-268 (VSDFEKKASNRSEI) and 275-286 (STEKENEEEKGP). Ser336 carries the phosphoserine modification. The interval 405–571 (TRKESEKVDR…LQIHVMDCII (167 aa)) is interaction with HD. The tract at residues 406–514 (RKESEKVDRA…RQSLMEMQSR (109 aa)) is interaction with MYO6. The UBAN motif lies at 468–473 (DFHAER). Ser520 carries the post-translational modification Phosphoserine. The segment at 541–571 (QRNIPIHSCPKCGEVLPDIDTLQIHVMDCII) adopts a CCHC NOA-type zinc-finger fold. Positions 549, 552, 565, and 569 each coordinate Zn(2+).

As to quaternary structure, self-associates. Interacts with HD. Interacts with GTF3A. Interacts with MYO6. Interacts (via UBAN) with ubiquitinated TFRC. Interacts with GTP-bound Rab8 (RAB8A and/or RAB8B). Interacts with TBC1D17. Interacts with TBK1. Interacts with TRAF3. Binds to linear ubiquitin chains. Interacts with LC3 family members MAP1LC3A, MAP1LC3B, GABARAP, GABARAPL1 and GABARAPL2; OPTN phosphorylation increases the association (at least with MAP1LC3B). Interacts with RAB12; the interaction may be indirect. Interacts with TBK1; this interaction leads to the Golgi localization of TBK1 and its subsequent activation. Interacts with palmitoyltransferase ZDHHC17/HIP14; the interaction does not lead to palmitoylation of OPTN. Interacts with CYLD. Interacts with TOM1; the interaction is indirect and is mediated by MYO6, which acts as a bridge between TOM1 and OPTN. Interacts with USP12; the interaction is independent of USP12 deubiquitinase activity and may be involved in regulation of autophagic flux. Post-translationally, phosphorylated by TBK1, leading to restrict bacterial proliferation in case of infection.

The protein localises to the cytoplasm. Its subcellular location is the perinuclear region. It is found in the golgi apparatus. It localises to the trans-Golgi network. The protein resides in the cytoplasmic vesicle. The protein localises to the autophagosome. Its subcellular location is the recycling endosome. Functionally, plays an important role in the maintenance of the Golgi complex, in membrane trafficking, in exocytosis, through its interaction with myosin VI and Rab8. Links myosin VI to the Golgi complex and plays an important role in Golgi ribbon formation. Negatively regulates the induction of IFNB in response to RNA virus infection. Plays a neuroprotective role in the eye and optic nerve. Probably part of the TNF-alpha signaling pathway that can shift the equilibrium toward induction of cell death. May act by regulating membrane trafficking and cellular morphogenesis via a complex that contains Rab8 and huntingtin (HD). Mediates the interaction of Rab8 with the probable GTPase-activating protein TBC1D17 during Rab8-mediated endocytic trafficking, such as that of transferrin receptor (TFRC/TfR); regulates Rab8 recruitment to tubules emanating from the endocytic recycling compartment. Autophagy receptor that interacts directly with both the cargo to become degraded and an autophagy modifier of the MAP1 LC3 family; targets ubiquitin-coated bacteria (xenophagy) and appears to function in the same pathway as SQSTM1 and CALCOCO2/NDP52. This is Optineurin (OPTN) from Macaca fascicularis (Crab-eating macaque).